We begin with the raw amino-acid sequence, 312 residues long: 4-hydroxyphenylacetate decarboxylase activating enzyme (312 aa).

The Radical SAM core domain maps to 16 to 299 (HDGPGCRTSV…MEHLQQLYLD (284 aa)). Residues Cys-30, Cys-34, Cys-37, Cys-56, Cys-62, Cys-65, and Cys-101 each coordinate [4Fe-4S] cluster. S-adenosyl-L-methionine is bound at residue 36-38 (WCA). 2 4Fe-4S ferredoxin-type domains span residues 47–79 (KHIM…FSED) and 80–112 (GKLK…CVKE). S-adenosyl-L-methionine contacts are provided by residues Gly-140, 189–191 (DVK), and His-263.

The protein belongs to the organic radical-activating enzymes family. As to quaternary structure, monomer. The cofactor is [4Fe-4S] cluster.

It carries out the reaction glycyl-[protein] + reduced [flavodoxin] + S-adenosyl-L-methionine = glycin-2-yl radical-[protein] + semiquinone [flavodoxin] + 5'-deoxyadenosine + L-methionine + H(+). Its function is as follows. Catalyzes activation of 4-hydroxyphenylacetate decarboxylase under anaerobic conditions by generation of an organic free radical on a glycine residue, via a homolytic cleavage of S-adenosyl-L-methionine (SAM). The polypeptide is 4-hydroxyphenylacetate decarboxylase activating enzyme (Clostridium scatologenes).